Here is a 321-residue protein sequence, read N- to C-terminus: uncharacterized protein (321 aa).

Positions 130 to 314 (NLVYDLETTG…NDVDALIKIM (185 aa)) constitute an Exonuclease domain.

This is an uncharacterized protein from Acanthamoeba polyphaga (Amoeba).